The primary structure comprises 177 residues: UPF0114 protein HPP12_0190 (177 aa).

Helical transmembrane passes span 15–35, 54–74, 102–122, and 145–165; these read WLLA…GYAF, LVLS…VLMV, FNAL…IFLL, and PIFW…LAAV.

This sequence belongs to the UPF0114 family.

Its subcellular location is the cell membrane. The polypeptide is UPF0114 protein HPP12_0190 (Helicobacter pylori (strain P12)).